Consider the following 217-residue polypeptide: ATP phosphoribosyltransferase (217 aa).

This sequence belongs to the ATP phosphoribosyltransferase family. Short subfamily. Heteromultimer composed of HisG and HisZ subunits.

It localises to the cytoplasm. The catalysed reaction is 1-(5-phospho-beta-D-ribosyl)-ATP + diphosphate = 5-phospho-alpha-D-ribose 1-diphosphate + ATP. Its pathway is amino-acid biosynthesis; L-histidine biosynthesis; L-histidine from 5-phospho-alpha-D-ribose 1-diphosphate: step 1/9. Functionally, catalyzes the condensation of ATP and 5-phosphoribose 1-diphosphate to form N'-(5'-phosphoribosyl)-ATP (PR-ATP). Has a crucial role in the pathway because the rate of histidine biosynthesis seems to be controlled primarily by regulation of HisG enzymatic activity. The chain is ATP phosphoribosyltransferase from Burkholderia ambifaria (strain MC40-6).